The following is a 154-amino-acid chain: 6,7-dimethyl-8-ribityllumazine synthase (154 aa).

Residues F15, 47 to 49, and 71 to 73 contribute to the 5-amino-6-(D-ribitylamino)uracil site; these read TFD and AVI. Residue 76–77 coordinates (2S)-2-hydroxy-3-oxobutyl phosphate; sequence ET. Catalysis depends on H79, which acts as the Proton donor. Residue L104 coordinates 5-amino-6-(D-ribitylamino)uracil. R119 is a (2S)-2-hydroxy-3-oxobutyl phosphate binding site.

It belongs to the DMRL synthase family.

It catalyses the reaction (2S)-2-hydroxy-3-oxobutyl phosphate + 5-amino-6-(D-ribitylamino)uracil = 6,7-dimethyl-8-(1-D-ribityl)lumazine + phosphate + 2 H2O + H(+). The protein operates within cofactor biosynthesis; riboflavin biosynthesis; riboflavin from 2-hydroxy-3-oxobutyl phosphate and 5-amino-6-(D-ribitylamino)uracil: step 1/2. In terms of biological role, catalyzes the formation of 6,7-dimethyl-8-ribityllumazine by condensation of 5-amino-6-(D-ribitylamino)uracil with 3,4-dihydroxy-2-butanone 4-phosphate. This is the penultimate step in the biosynthesis of riboflavin. This chain is 6,7-dimethyl-8-ribityllumazine synthase, found in Saccharolobus islandicus (strain M.16.27) (Sulfolobus islandicus).